The primary structure comprises 483 residues: Glutamate--tRNA ligase (483 aa).

The 'HIGH' region motif lies at 11-21 (PSPTGLLHIGN). Positions 255–259 (KLSKR) match the 'KMSKS' region motif. Residue lysine 258 participates in ATP binding.

The protein belongs to the class-I aminoacyl-tRNA synthetase family. Glutamate--tRNA ligase type 1 subfamily. In terms of assembly, monomer.

It localises to the cytoplasm. The enzyme catalyses tRNA(Glu) + L-glutamate + ATP = L-glutamyl-tRNA(Glu) + AMP + diphosphate. Its function is as follows. Catalyzes the attachment of glutamate to tRNA(Glu) in a two-step reaction: glutamate is first activated by ATP to form Glu-AMP and then transferred to the acceptor end of tRNA(Glu). This Lactococcus lactis subsp. cremoris (strain MG1363) protein is Glutamate--tRNA ligase.